The sequence spans 417 residues: Serine hydroxymethyltransferase (417 aa).

(6S)-5,6,7,8-tetrahydrofolate contacts are provided by residues Leu121 and 125-127 (GHL). Lys229 carries the post-translational modification N6-(pyridoxal phosphate)lysine. (6S)-5,6,7,8-tetrahydrofolate is bound at residue 355-357 (SPF).

Belongs to the SHMT family. As to quaternary structure, homodimer. Requires pyridoxal 5'-phosphate as cofactor.

Its subcellular location is the cytoplasm. It carries out the reaction (6R)-5,10-methylene-5,6,7,8-tetrahydrofolate + glycine + H2O = (6S)-5,6,7,8-tetrahydrofolate + L-serine. The protein operates within one-carbon metabolism; tetrahydrofolate interconversion. It participates in amino-acid biosynthesis; glycine biosynthesis; glycine from L-serine: step 1/1. Catalyzes the reversible interconversion of serine and glycine with tetrahydrofolate (THF) serving as the one-carbon carrier. This reaction serves as the major source of one-carbon groups required for the biosynthesis of purines, thymidylate, methionine, and other important biomolecules. Also exhibits THF-independent aldolase activity toward beta-hydroxyamino acids, producing glycine and aldehydes, via a retro-aldol mechanism. The polypeptide is Serine hydroxymethyltransferase (Edwardsiella ictaluri (strain 93-146)).